We begin with the raw amino-acid sequence, 24 residues long: Brevinin-1Bf (24 aa).

Cysteine 18 and cysteine 24 are oxidised to a cystine.

In terms of tissue distribution, expressed by the skin glands.

The protein localises to the secreted. Antibacterial activity against Gram-positive bacterium S.aureus and Gram-negative bacterium E.coli. The chain is Brevinin-1Bf from Lithobates berlandieri (Rio Grande leopard frog).